A 199-amino-acid polypeptide reads, in one-letter code: DnaJ homolog subfamily C member 5B (199 aa).

Phosphoserine is present on residues S14 and S16. Residues A19 to G84 enclose the J domain.

In terms of assembly, interacts with the chaperone complex consisting of HSC70 and SGTA. In terms of processing, palmitoylated.

Its subcellular location is the membrane. The sequence is that of DnaJ homolog subfamily C member 5B (DNAJC5B) from Bos taurus (Bovine).